The primary structure comprises 89 residues: Cell division topological specificity factor (89 aa).

It belongs to the MinE family.

Prevents the cell division inhibition by proteins MinC and MinD at internal division sites while permitting inhibition at polar sites. This ensures cell division at the proper site by restricting the formation of a division septum at the midpoint of the long axis of the cell. In Paracoccus denitrificans (strain Pd 1222), this protein is Cell division topological specificity factor.